The primary structure comprises 34 residues: Photosystem II reaction center protein Y (34 aa).

At 1-4 (MDIR) the chain is on the lumenal side. A helical membrane pass occupies residues 5–23 (LLIVLLPVLAAASWALYNI). At 24 to 34 (GRVALQQFRSM) the chain is on the stromal side.

The protein belongs to the PsbY family. As to quaternary structure, PSII is composed of 1 copy each of membrane proteins PsbA, PsbB, PsbC, PsbD, PsbE, PsbF, PsbH, PsbI, PsbJ, PsbK, PsbL, PsbM, PsbT, PsbX, PsbY, PsbZ, Psb30/Ycf12, at least 3 peripheral proteins of the oxygen-evolving complex and a large number of cofactors. It forms dimeric complexes.

Its subcellular location is the plastid. The protein localises to the chloroplast thylakoid membrane. Loosely associated component of the core of photosystem II (PSII), it is not always seen in crystals. PSII is a light-driven water plastoquinone oxidoreductase, using light energy to abstract electrons from H(2)O, generating a proton gradient subsequently used for ATP formation. The polypeptide is Photosystem II reaction center protein Y (Gracilaria tenuistipitata var. liui (Red alga)).